The sequence spans 364 residues: Peptidoglycan transport system permease protein YejB (364 aa).

The next 6 helical transmembrane spans lie at 9-29, 134-154, 171-191, 219-239, 283-303, and 325-345; these read LALMIPTIVGIMGISFLVIQF, SASLGFWILIISYVISIPLGI, IIIIGYAVPSFLFGILLIVLF, IIDYFWHLTLPLIALSLSAFA, IVIAGFPGAFISAFFTGSLLI, and YPIVFGTLFIFSLMGLVVGLL. An ABC transmembrane type-1 domain is found at 131–350; sequence LPVSASLGFW…VVGLLSDLIY (220 aa).

It belongs to the binding-protein-dependent transport system permease family. In terms of assembly, the complex is composed of one ATP-binding protein (YejF), two transmembrane proteins (YejB and YejE) and a solute-binding protein (YepA or YejA).

The protein localises to the cell inner membrane. Its function is as follows. Part of the ABC transporter complex YejBEF-YepA involved in the uptake of muropeptides, the breakdown products of cell wall peptidoglycan. The import of muropeptides into the cell enables peptidoglycan recycling, which is vital for cell wall integrity in this bacterium. Is also probably part of the ABC transporter complex YejABEF, which is likely involved in broad-spectrum peptide import. Responsible for the translocation of the substrate across the membrane. The sequence is that of Peptidoglycan transport system permease protein YejB from Agrobacterium fabrum (strain C58 / ATCC 33970) (Agrobacterium tumefaciens (strain C58)).